Reading from the N-terminus, the 260-residue chain is Triosephosphate isomerase (260 aa).

A substrate-binding site is contributed by 11-13 (NWK). Residue His-103 is the Electrophile of the active site. Catalysis depends on Glu-175, which acts as the Proton acceptor. Substrate contacts are provided by residues Gly-181, Ser-220, and 241 to 242 (GG).

The protein belongs to the triosephosphate isomerase family. In terms of assembly, homodimer.

The protein resides in the cytoplasm. The enzyme catalyses D-glyceraldehyde 3-phosphate = dihydroxyacetone phosphate. Its pathway is carbohydrate biosynthesis; gluconeogenesis. It participates in carbohydrate degradation; glycolysis; D-glyceraldehyde 3-phosphate from glycerone phosphate: step 1/1. Its function is as follows. Involved in the gluconeogenesis. Catalyzes stereospecifically the conversion of dihydroxyacetone phosphate (DHAP) to D-glyceraldehyde-3-phosphate (G3P). This chain is Triosephosphate isomerase, found in Shewanella sp. (strain MR-7).